Reading from the N-terminus, the 158-residue chain is Cyclic pyranopterin monophosphate synthase (158 aa).

Substrate-binding positions include 75–77 (LCH) and 113–114 (ME). The active site involves D128.

This sequence belongs to the MoaC family. As to quaternary structure, homohexamer; trimer of dimers.

The catalysed reaction is (8S)-3',8-cyclo-7,8-dihydroguanosine 5'-triphosphate = cyclic pyranopterin phosphate + diphosphate. It participates in cofactor biosynthesis; molybdopterin biosynthesis. In terms of biological role, catalyzes the conversion of (8S)-3',8-cyclo-7,8-dihydroguanosine 5'-triphosphate to cyclic pyranopterin monophosphate (cPMP). The sequence is that of Cyclic pyranopterin monophosphate synthase from Azorhizobium caulinodans (strain ATCC 43989 / DSM 5975 / JCM 20966 / LMG 6465 / NBRC 14845 / NCIMB 13405 / ORS 571).